The chain runs to 460 residues: GTPase Der (460 aa).

2 consecutive EngA-type G domains span residues 2–164 (QSII…HEEF) and 196–368 (IRVG…ENFT). GTP is bound by residues 8–15 (GKPNVGKS), 55–59 (DSGGL), 116–119 (NKVD), 202–209 (GRVNVGKS), 249–253 (DTAGI), and 313–316 (NKWD). Positions 369–453 (QKIQTSKLNT…PLVIASRKKG (85 aa)) constitute a KH-like domain.

Belongs to the TRAFAC class TrmE-Era-EngA-EngB-Septin-like GTPase superfamily. EngA (Der) GTPase family. Associates with the 50S ribosomal subunit.

Functionally, GTPase that plays an essential role in the late steps of ribosome biogenesis. The chain is GTPase Der from Campylobacter jejuni subsp. jejuni serotype O:2 (strain ATCC 700819 / NCTC 11168).